We begin with the raw amino-acid sequence, 283 residues long: Ribosomal RNA small subunit methyltransferase I (283 aa).

It belongs to the methyltransferase superfamily. RsmI family.

The protein resides in the cytoplasm. It catalyses the reaction cytidine(1402) in 16S rRNA + S-adenosyl-L-methionine = 2'-O-methylcytidine(1402) in 16S rRNA + S-adenosyl-L-homocysteine + H(+). Its function is as follows. Catalyzes the 2'-O-methylation of the ribose of cytidine 1402 (C1402) in 16S rRNA. The sequence is that of Ribosomal RNA small subunit methyltransferase I from Haemophilus influenzae (strain ATCC 51907 / DSM 11121 / KW20 / Rd).